A 244-amino-acid polypeptide reads, in one-letter code: MASLPRRLIWSFSYILRESFPIVSRRNCVSLLRASWRKVLSVGVGTSVCAIPVGQRSEPTLSSESLIKRAVSLVADSSSTFLSQTTYALVESLTEYTTAVYTLISLQQKYTSLLDKMNSNEESAIWQVIIGARVQMKQLKEQYLKYESSWQRAVSLSEMAAEAAYQSGADQASVTVRNHIQIVQTQVQQARNQAHIAEVQLAASQTDEIKRTITEDKGNPPSGGSPRSSLSEEEEIPEAYLRED.

A mitochondrion-targeting transit peptide spans 1–38 (MASLPRRLIWSFSYILRESFPIVSRRNCVSLLRASWRK). The short motif at 50-54 (AIPVG) is the IAP-binding element. Basic and acidic residues predominate over residues 207-218 (DEIKRTITEDKG). The interval 207-244 (DEIKRTITEDKGNPPSGGSPRSSLSEEEEIPEAYLRED) is disordered. The span at 220 to 229 (PPSGGSPRSS) shows a compositional bias: low complexity.

It belongs to the Smac/DIABLO protein family. In terms of assembly, homodimer.

The protein resides in the mitochondrion. In terms of biological role, promotes apoptosis. Acts by opposing the inhibitory activity of inhibitor of apoptosis proteins (IAP). The chain is Diablo homolog, mitochondrial from Xenopus tropicalis (Western clawed frog).